We begin with the raw amino-acid sequence, 395 residues long: S-adenosylmethionine synthase (395 aa).

His16 contacts ATP. Asp18 contacts Mg(2+). Glu44 provides a ligand contact to K(+). L-methionine-binding residues include Glu57 and Gln100. Residues 100–110 (QSPDIAQGVDD) form a flexible loop region. ATP contacts are provided by residues 174–176 (DAK), 241–242 (RF), Asp250, 256–257 (RK), Ala273, and Lys277. An L-methionine-binding site is contributed by Asp250. An L-methionine-binding site is contributed by Lys281.

Belongs to the AdoMet synthase family. Homotetramer; dimer of dimers. Mg(2+) is required as a cofactor. K(+) serves as cofactor.

It is found in the cytoplasm. The enzyme catalyses L-methionine + ATP + H2O = S-adenosyl-L-methionine + phosphate + diphosphate. It functions in the pathway amino-acid biosynthesis; S-adenosyl-L-methionine biosynthesis; S-adenosyl-L-methionine from L-methionine: step 1/1. Catalyzes the formation of S-adenosylmethionine (AdoMet) from methionine and ATP. The overall synthetic reaction is composed of two sequential steps, AdoMet formation and the subsequent tripolyphosphate hydrolysis which occurs prior to release of AdoMet from the enzyme. This chain is S-adenosylmethionine synthase, found in Limosilactobacillus reuteri (strain DSM 20016) (Lactobacillus reuteri).